An 847-amino-acid chain; its full sequence is UPF0182 protein CYB_0372 (847 aa).

Helical transmembrane passes span 7-27 (GLFL…LAAF), 51-71 (WGLG…NICS), 76-96 (ATLA…AGSL), 141-161 (FNLV…ELGL), 168-188 (LALS…LFLI), 220-240 (LPAT…FWAL), and 259-279 (WASS…FGLL).

This sequence belongs to the UPF0182 family.

The protein localises to the cell membrane. The sequence is that of UPF0182 protein CYB_0372 from Synechococcus sp. (strain JA-2-3B'a(2-13)) (Cyanobacteria bacterium Yellowstone B-Prime).